A 52-amino-acid chain; its full sequence is DNA-directed RNA polymerase subunit Rpo12 (52 aa).

Zn(2+)-binding residues include Cys13, Cys30, and Cys33.

The protein belongs to the archaeal Rpo12/eukaryotic RPC10 RNA polymerase subunit family. In terms of assembly, part of the RNA polymerase complex. The cofactor is Zn(2+).

Its subcellular location is the cytoplasm. The enzyme catalyses RNA(n) + a ribonucleoside 5'-triphosphate = RNA(n+1) + diphosphate. In terms of biological role, DNA-dependent RNA polymerase (RNAP) catalyzes the transcription of DNA into RNA using the four ribonucleoside triphosphates as substrates. The sequence is that of DNA-directed RNA polymerase subunit Rpo12 from Pyrobaculum arsenaticum (strain DSM 13514 / JCM 11321 / PZ6).